Consider the following 130-residue polypeptide: Small ribosomal subunit protein uS9 (130 aa).

Positions 104 to 130 (LTRDPRMKERRKYGLKKARKAPQFSKR) are disordered. Positions 111–130 (KERRKYGLKKARKAPQFSKR) are enriched in basic residues.

The protein belongs to the universal ribosomal protein uS9 family.

The protein is Small ribosomal subunit protein uS9 of Moorella thermoacetica (strain ATCC 39073 / JCM 9320).